Consider the following 114-residue polypeptide: Ribonuclease P protein component (114 aa).

This sequence belongs to the RnpA family. Consists of a catalytic RNA component (M1 or rnpB) and a protein subunit.

The catalysed reaction is Endonucleolytic cleavage of RNA, removing 5'-extranucleotides from tRNA precursor.. Its function is as follows. RNaseP catalyzes the removal of the 5'-leader sequence from pre-tRNA to produce the mature 5'-terminus. It can also cleave other RNA substrates such as 4.5S RNA. The protein component plays an auxiliary but essential role in vivo by binding to the 5'-leader sequence and broadening the substrate specificity of the ribozyme. The sequence is that of Ribonuclease P protein component from Borrelia turicatae (strain 91E135).